Reading from the N-terminus, the 916-residue chain is Transmembrane channel-like protein 2-A (916 aa).

The segment covering 1–13 (MPKKSDTTRKLED) has biased composition (basic and acidic residues). Residues 1 to 159 (MPKKSDTTRK…DEEDESMSEG (159 aa)) form a disordered region. Residues 1-271 (MPKKSDTTRK…IFLRWMYGMN (271 aa)) are Cytoplasmic-facing. The span at 14–26 (VGIEIDGDVDSAE) shows a compositional bias: acidic residues. 2 stretches are compositionally biased toward basic residues: residues 31-45 (SKGK…GKRG) and 62-72 (KGRRAANKKKP). Residues 97–107 (NVRERGDGDKK) are compositionally biased toward basic and acidic residues. Basic residues predominate over residues 108–117 (KSGKKGRRGG). Positions 118-138 (KKNEKGKGKDSDKDSDKDEKK) are enriched in basic and acidic residues. Residues 145–157 (DESDSDEEDESMS) show a composition bias toward acidic residues. Residues 272-292 (LVLFSLTFGLVVIPEVLMGLP) form a helical membrane-spanning segment. Topologically, residues 293 to 344 (YGSIPRKTVPREDQDTAMDYSVLTDFNGYCKYSVLFYGYYNNQRTIGFLKFR) are extracellular. The chain crosses the membrane as a helical span at residues 345 to 365 (LPLSYLMVGIGTFGYSLMVVI). At 366-438 (RTMAKNADVG…ENIHLRRFLR (73 aa)) the chain is on the cytoplasmic side. Residues 439 to 459 (VLANFLITCTLGGSGYLIYFV) traverse the membrane as a helical segment. The Extracellular portion of the chain corresponds to 460–478 (VKRSQEFQNMDNLSWYEKN). The chain crosses the membrane as a helical span at residues 479-499 (ELEIIMSLLGLVGPMLFETIA). Topologically, residues 500–516 (ELEEYHPRIALKWQLGR) are cytoplasmic. The chain crosses the membrane as a helical span at residues 517 to 537 (IFALFLGNLYTFLLALFDEVN). The Extracellular portion of the chain corresponds to 538-649 (AKLEEEESIK…EFDISGNVLG (112 aa)). A helical membrane pass occupies residues 650-670 (LVFNQGMIWMGAFYAPGLVGI). Residues 671-704 (NVLRLLSSMYYQCWAVMACNVPHERVFKASKSNN) are Cytoplasmic-facing. The helical transmembrane segment at 705 to 725 (FYMGLLLLILFLSLLPVVYTI) threads the bilayer. Residues 726–762 (MSLPPSFDCGPFSGKERMFDVVMETIDLDLPAFMGTL) lie on the Extracellular side of the membrane. A helical membrane pass occupies residues 763–783 (FGYVANPGLVISAVLLMVLAI). The Cytoplasmic segment spans residues 784 to 916 (YYLNSVSEAY…RGQGPPPRRQ (133 aa)). Residues 804-818 (MQMARDEEKNRRNNK) show a composition bias toward basic and acidic residues. Residues 804–916 (MQMARDEEKN…RGQGPPPRRQ (113 aa)) form a disordered region. Residues 883–892 (ARGPVTRAPG) are compositionally biased toward low complexity.

This sequence belongs to the TMC family. In terms of assembly, interacts (via N-terminus) with both isoforms CD1 and CD3 of PCDH15A (via cytoplasmic domain); this interaction is required for mechanotransduction of the hair cells and correct localization of PCDH15A in hair bundles of the hair cells. In adults, expression is restricted to the hair cells of inner ear and lateral line organ. Expressed at higher levels in the larval inner ear than in the lateral-line neuromasts.

It localises to the cell membrane. The enzyme catalyses Ca(2+)(in) = Ca(2+)(out). Pore-forming subunit of the mechanotransducer (MET) non-selective cation channel complex located at tips of hair-cell stereocilia. Highly permeable to calcium and likely transports monovalent cations. The sequence is that of Transmembrane channel-like protein 2-A from Danio rerio (Zebrafish).